Here is a 291-residue protein sequence, read N- to C-terminus: Translocon-associated protein subunit alpha (291 aa).

Residues 1–20 (MRLLPRLLLLLLLVFPATVL) form the signal peptide. Topologically, residues 21-207 (FRGGPRGSLA…EREDGLDGET (187 aa)) are lumenal. Positions 34–83 (DLTEDEETVEDSIIEDEDDEAEVEEDEPTDLVEDKEEEDVSGEPEASPSA) are disordered. Acidic residues predominate over residues 35–75 (LTEDEETVEDSIIEDEDDEAEVEEDEPTDLVEDKEEEDVSG). 2 N-linked (GlcNAc...) asparagine glycosylation sites follow: N136 and N191. Residues 208-228 (IFMYMFLAGLGLLVIVGLHQL) form a helical membrane-spanning segment. Topologically, residues 229-291 (LESRKRKRPV…AQKRSVGSDE (63 aa)) are cytoplasmic. At S247 the chain carries Phosphoserine. Position 260 is a phosphothreonine (T260). Residues 263 to 291 (QIMQSRRDKASPRRLPRKRAQKRSVGSDE) form a disordered region. Position 273 is a phosphoserine (S273). Residues 274 to 284 (PRRLPRKRAQK) are compositionally biased toward basic residues.

The protein belongs to the TRAP-alpha family. In terms of assembly, heterotetramer of TRAP-alpha, TRAP-beta, TRAP-delta and TRAP-gamma. Interacts with palmitoylated calnexin (CALX), the interaction is required for efficient folding of glycosylated proteins. In terms of processing, phosphorylated in its cytoplasmic tail.

It is found in the endoplasmic reticulum membrane. In terms of biological role, TRAP proteins are part of a complex whose function is to bind calcium to the ER membrane and thereby regulate the retention of ER resident proteins. May be involved in the recycling of the translocation apparatus after completion of the translocation process or may function as a membrane-bound chaperone facilitating folding of translocated proteins. This chain is Translocon-associated protein subunit alpha (SSR1), found in Pongo abelii (Sumatran orangutan).